The chain runs to 1059 residues: Cellulose synthase catalytic subunit A [UDP-forming] (1059 aa).

Disordered stretches follow at residues 1-159 and 174-220; these read MDRN…RFDT and MRQH…KHVA. The segment covering 15 to 36 has biased composition (low complexity); the sequence is NNINSSGGSYNNSMNNSSNNIG. Composition is skewed to polar residues over residues 40–57 and 142–154; these read GNNQSSRNLKPKPSQSNL and NSPSSEYGTTSGG. The segment covering 181-194 has biased composition (low complexity); it reads QEQQQQQQQQQQQQ. The segment covering 204-219 has biased composition (basic residues); the sequence is QKKKPSSMQLSKKKHV. A run of 3 helical transmembrane segments spans residues 246 to 266, 280 to 300, and 306 to 323; these read FSHAILQATMAVFLIWNIFYF, ITFSYSILFIIVEFISFLGSA, and FTNPCTFVLVVTLEQILA. Positions 328–628 are catalytic subdomain A; it reads KHPTVMMYVC…FLGLLDADQQ (301 aa). Asp-370 is an active-site residue. Residues Asp-624 and Asp-626 each contribute to the substrate site. The interval 701 to 761 is catalytic subdomain B; sequence QPLYDIGGIM…EQRKRWAQGA (61 aa). The active site involves Asp-717. Transmembrane regions (helical) follow at residues 790–810 and 813–833; these read IYPFLSPTAFFYGASPLIMSI and VPIVVKDPIIFILVGMIPVMV. The tract at residues 933–953 is disordered; it reads DNAQESSGKHKAEQSFRTSNK. Residues 939–953 show a composition bias toward basic and acidic residues; the sequence is SGKHKAEQSFRTSNK. Helical transmembrane passes span 963–983, 993–1013, and 1035–1055; these read LFLPNIILFVVNILAMMSAVL, WLLVVVAGFSFSTLWHLWSFI, and IVLFLVLGFLVLLFVDVKVCI.

The protein belongs to the glycosyltransferase 2 family. Requires Mg(2+) as cofactor.

It is found in the membrane. The enzyme catalyses [(1-&gt;4)-beta-D-glucosyl](n) + UDP-alpha-D-glucose = [(1-&gt;4)-beta-D-glucosyl](n+1) + UDP + H(+). It functions in the pathway glycan metabolism; amoeba cellulose biosynthesis. In terms of biological role, catalytic subunit of cellulose synthase. It incorporates glucose from uridine 5'-diphosphate glucose (UDP-alpha-D-glucose) to cellulose (a (1-&gt;4)-beta-D-glucan), which is produced as an extracellular component for mechanical and chemical protection at the onset of the stalk formation, when the cells exhibit multicellular behavior during culmination. This Dictyostelium discoideum (Social amoeba) protein is Cellulose synthase catalytic subunit A [UDP-forming] (dcsA).